The sequence spans 507 residues: Chromosomal replication initiator protein DnaA (507 aa).

Residues 1–87 (MSVELWQQCV…IGSKRSSAPR (87 aa)) are domain I, interacts with DnaA modulators. The span at 85–110 (APRAAPNAPLAAAQVSQAQANAAPAS) shows a compositional bias: low complexity. A disordered region spans residues 85–158 (APRAAPNAPL…QQAPVRAEQR (74 aa)). The domain II stretch occupies residues 87–170 (RAAPNAPLAA…QVEGALKHTS (84 aa)). The span at 126–140 (QKTEEISEEPSRDSF) shows a compositional bias: basic and acidic residues. A domain III, AAA+ region region spans residues 171 to 387 (YLNRTFTFEN…GALKRVIAHS (217 aa)). Residues Gly-215, Gly-217, Lys-218, and Thr-219 each coordinate ATP. Residues 388 to 507 (HFMGRDITIE…YKNLLRTLTT (120 aa)) are domain IV, binds dsDNA.

This sequence belongs to the DnaA family. Oligomerizes as a right-handed, spiral filament on DNA at oriC.

It localises to the cytoplasm. In terms of biological role, plays an essential role in the initiation and regulation of chromosomal replication. ATP-DnaA binds to the origin of replication (oriC) to initiate formation of the DNA replication initiation complex once per cell cycle. Binds the DnaA box (a 9 base pair repeat at the origin) and separates the double-stranded (ds)DNA. Forms a right-handed helical filament on oriC DNA; dsDNA binds to the exterior of the filament while single-stranded (ss)DNA is stabiized in the filament's interior. The ATP-DnaA-oriC complex binds and stabilizes one strand of the AT-rich DNA unwinding element (DUE), permitting loading of DNA polymerase. After initiation quickly degrades to an ADP-DnaA complex that is not apt for DNA replication. Binds acidic phospholipids. This Pseudomonas fluorescens (strain Pf0-1) protein is Chromosomal replication initiator protein DnaA.